The following is a 223-amino-acid chain: 3,4-dihydroxy-2-butanone 4-phosphate synthase (223 aa).

Residues 47–48 (RE), aspartate 52, 160–164 (RRGHT), and glutamate 184 contribute to the D-ribulose 5-phosphate site. Glutamate 48 contacts Mg(2+). A Mg(2+)-binding site is contributed by histidine 163.

It belongs to the DHBP synthase family. In terms of assembly, homodimer. Mg(2+) serves as cofactor. The cofactor is Mn(2+).

The catalysed reaction is D-ribulose 5-phosphate = (2S)-2-hydroxy-3-oxobutyl phosphate + formate + H(+). The protein operates within cofactor biosynthesis; riboflavin biosynthesis; 2-hydroxy-3-oxobutyl phosphate from D-ribulose 5-phosphate: step 1/1. Catalyzes the conversion of D-ribulose 5-phosphate to formate and 3,4-dihydroxy-2-butanone 4-phosphate. The protein is 3,4-dihydroxy-2-butanone 4-phosphate synthase of Cupriavidus pinatubonensis (strain JMP 134 / LMG 1197) (Cupriavidus necator (strain JMP 134)).